The chain runs to 351 residues: Transcription elongation factor A N-terminal and central domain-containing protein (351 aa).

Residues 5 to 82 enclose the TFIIS N-terminal domain; it reads NQIAARASLI…SKWKAVYKQT (78 aa). 2 disordered regions span residues 86–119 and 144–169; these read ARNSPKLFPVRGNKEENSGPSHDPSQNETLGICS and LKPKEEHFGDGDPESTGKRSSELLDP. Polar residues predominate over residues 103–119; sequence SGPSHDPSQNETLGICS. Residues 145–165 show a composition bias toward basic and acidic residues; that stretch reads KPKEEHFGDGDPESTGKRSSE. The TFIIS central domain occupies 173–289; the sequence is MRTKCIELLY…EHYLPQVIDG (117 aa).

The protein is Transcription elongation factor A N-terminal and central domain-containing protein (TCEANC) of Homo sapiens (Human).